A 494-amino-acid polypeptide reads, in one-letter code: Calmodulin-binding protein 60 A (494 aa).

The interval 1–62 (MRIPTYDFGS…AGIKWICEKE (62 aa)) is calmodulin-binding. Residues 132-252 (VSDWTDEDIR…AFHRRLNLSN (121 aa)) form a DNA-binding region.

It belongs to the plant ACBP60 protein family. Interacts with calmodulin (CaM). Expressed in stems, flowers and root.

It is found in the nucleus. Transcription activator that binds DNA in a sequence-specific manner, likely 5'-GAAATTTTGG-3', to promote the expression of target genes. The protein is Calmodulin-binding protein 60 A of Arabidopsis thaliana (Mouse-ear cress).